The primary structure comprises 981 residues: Ubiquitin carboxyl-terminal hydrolase 37 (981 aa).

The KEN box 1 signature appears at 32-34; the sequence is KEN. 2 short sequence motifs (D-box) span residues 71–79 and 96–105; these read RLMLTLQDN and RLFLDAVHQN. A disordered region spans residues 111-308; it reads MKPSQGSGSF…SAKRSLGFLP (198 aa). Ser-114 carries the phosphoserine modification. Positions 135–148 are enriched in polar residues; sequence RQLSYSDNQASSKR. Residues 149–159 are compositionally biased toward basic and acidic residues; it reads GSLETKDDIPF. The D-box 3 signature appears at 160 to 168; that stretch reads RKVLGNPGR. Phosphoserine is present on Ser-170. Residues 172-195 are compositionally biased toward polar residues; the sequence is KTATGSGITVTRTIPSLTSASTPL. Ser-212 bears the Phosphoserine mark. The short motif at 223-225 is the KEN box 2 element; that stretch reads KEN. Residues 245 to 259 show a composition bias toward basic and acidic residues; the sequence is SREKQLSLKQSEENR. Residues 266 to 300 are compositionally biased toward polar residues; the sequence is LQSSSFYGSRTGSKDYSSGSTNLDRTNVSGQTPSA. Positions 343–953 constitute a USP domain; sequence QGFSNLGNTC…SGYIFFYMHK (611 aa). Residue Cys-352 is the Nucleophile of the active site. Ser-630 is subject to Phosphoserine; by CDK2. 2 positions are modified to phosphoserine: Ser-652 and Ser-654. Disordered regions lie at residues 673 to 704 and 719 to 831; these read GCEQ…GFDG and KREA…EQKE. 2 stretches are compositionally biased toward basic and acidic residues: residues 683-697 and 719-734; these read KDSK…KSEL and KREA…DDKP. A UIM 1 domain is found at 706-725; it reads SEEELLAAVLEMSKREASPT. Phosphoserine is present on Ser-772. Over residues 776-788 the composition is skewed to basic and acidic residues; that stretch reads ITKDCDENKENKT. The KEN box 3 motif lies at 784 to 786; sequence KEN. UIM domains follow at residues 808–827 and 830–849; these read REEQ…QEAW and KEDD…FNNS. Positions 813–824 are enriched in low complexity; sequence LQQALAQSLQEQ. His-908 functions as the Proton acceptor in the catalytic mechanism.

Belongs to the peptidase C19 family. Interacts with FZR1/CDH1. Interacts with CDT1. Post-translationally, polyubiquitinated via 'Lys-11'-linked ubiquitin by the APC(CDH1) complex during late mitosis, leading to its degradation. Able to mediate auto-deubiquitination. Phosphorylated at Ser-630 by CDK2 during G1/S phase but not during mitosis; phosphorylation at Ser-630 is required for deubiquitinase activity. Also polyubiquitinated during early G1 phase, without leading to degradation. Phosphorylated at Ser-114 by ATM following DNA damage, which in turn increases its deubiquitination activity towards BLM.

It localises to the nucleus. The protein localises to the chromosome. It catalyses the reaction Thiol-dependent hydrolysis of ester, thioester, amide, peptide and isopeptide bonds formed by the C-terminal Gly of ubiquitin (a 76-residue protein attached to proteins as an intracellular targeting signal).. Functionally, deubiquitinase that plays a role in different processes including cell cycle regulation, DNA replication or DNA damage response. Antagonizes the anaphase-promoting complex (APC/C) during G1/S transition by mediating deubiquitination of cyclin-A (CCNA1 and CCNA2), thereby promoting S phase entry. Specifically mediates deubiquitination of 'Lys-11'-linked polyubiquitin chains, a specific ubiquitin-linkage type mediated by the APC/C complex. Phosphorylation at Ser-628 during G1/S phase maximizes the deubiquitinase activity, leading to prevent degradation of cyclin-A (CCNA1 and CCNA2). Plays an important role in the regulation of DNA replication by stabilizing the licensing factor CDT1. Also plays an essential role beyond S-phase entry to promote the efficiency and fidelity of replication by deubiquitinating checkpoint kinase 1/CHK1, promoting its stability. Sustains the DNA damage response (DDR) by deubiquitinating and stabilizing the ATP-dependent DNA helicase BLM. Mechanistically, DNA double-strand breaks (DSB) promotes ATM-mediated phosphorylation of USP37 and enhances the binding between USP37 and BLM. Promotes cell migration by deubiquitinating and stabilizing the epithelial-mesenchymal transition (EMT)-inducing transcription factor SNAI. Plays a role in the regulation of mitotic spindle assembly and mitotic progression by associating with chromatin-associated WAPL and stabilizing it through deubiquitination. The chain is Ubiquitin carboxyl-terminal hydrolase 37 (USP37) from Canis lupus familiaris (Dog).